The sequence spans 191 residues: 3-isopropylmalate dehydratase small subunit (191 aa).

Belongs to the LeuD family. LeuD type 1 subfamily. Heterodimer of LeuC and LeuD.

It carries out the reaction (2R,3S)-3-isopropylmalate = (2S)-2-isopropylmalate. Its pathway is amino-acid biosynthesis; L-leucine biosynthesis; L-leucine from 3-methyl-2-oxobutanoate: step 2/4. In terms of biological role, catalyzes the isomerization between 2-isopropylmalate and 3-isopropylmalate, via the formation of 2-isopropylmaleate. In Lactococcus lactis subsp. cremoris (strain MG1363), this protein is 3-isopropylmalate dehydratase small subunit.